The sequence spans 298 residues: RNA exonuclease 4 (298 aa).

Positions 1–73 form a coiled coil; it reads MRKTVRKNKQ…EAKLKLKSAT (73 aa). The Exonuclease domain maps to 125 to 275; sequence FFSIDCKIIE…RDTIINVILY (151 aa).

This sequence belongs to the REXO4 family.

The protein resides in the nucleus. In Dictyostelium discoideum (Social amoeba), this protein is RNA exonuclease 4 (rexo4).